Reading from the N-terminus, the 737-residue chain is Relaxin receptor 2 (737 aa).

The Extracellular portion of the chain corresponds to 1–399 (MFPLLHFIVL…SSFEDLLANN (399 aa)). The LDL-receptor class A domain occupies 27 to 64 (LCQKGYFPCGNLTKCLPRAFHCDGVDDCGNGADEDNCG). Cystine bridges form between Cys28–Cys41, Cys35–Cys54, and Cys48–Cys63. An N-linked (GlcNAc...) asparagine glycan is attached at Asn37. The N-linked (GlcNAc...) asparagine glycan is linked to Asn121. 10 LRR repeats span residues 121–142 (NTTL…VFTK), 145–166 (QLKQ…AFFG), 169–190 (NLQI…VFKD), 193–214 (QLTW…LFTG), 217–238 (SLFF…MCAQ), 241–262 (QLNW…SFLS), 265–286 (SLTV…TFSS), 289–310 (NLGE…IFKD), 313–334 (LLQK…QFES), and 337–358 (QLQS…MFQP). Residue Asn257 is glycosylated (N-linked (GlcNAc...) asparagine). N-linked (GlcNAc...) asparagine glycosylation occurs at Asn318. Residue Asn361 is glycosylated (N-linked (GlcNAc...) asparagine). A helical transmembrane segment spans residues 400–420 (ILRIFVWVIAFITCFGNLFVI). The Cytoplasmic segment spans residues 421 to 438 (GMRSFIKAENTTHATSIK). The chain crosses the membrane as a helical span at residues 439 to 459 (ILCCADCLMGVYLFFIGFFDI). The Extracellular portion of the chain corresponds to 460-478 (KYRGQYQKYALLWMESLQC). Cys478 and Cys556 are oxidised to a cystine. The chain crosses the membrane as a helical span at residues 479–501 (RLMGFLAMLSTEVSVLLLTYLTL). Residues 502 to 520 (EKFLAIVFPFSNIRPGKWQ) are Cytoplasmic-facing. Residues 521–541 (TMVILICIWIVGFLIAVIPFW) form a helical membrane-spanning segment. At 542–575 (KEDYFGNFYGKNGVCFPLYYDQTEDIGSKGYSLG) the chain is on the extracellular side. The chain crosses the membrane as a helical span at residues 576–596 (IFLGVNLLAFLIIVFSYTIMF). The Cytoplasmic portion of the chain corresponds to 597-622 (CSIKKTALQTSEVRNPIGREVAVANR). Residues 623-643 (FFFIVFSDAICWIPVFVIKIL) traverse the membrane as a helical segment. Residues 644-653 (SLFRVEIPGT) lie on the Extracellular side of the membrane. A helical membrane pass occupies residues 654–674 (ITSWIVIFFLPVNSALNPILY). Over 675 to 737 (TLTTSFFKDK…LGDSIVKPIS (63 aa)) the chain is Cytoplasmic.

The protein belongs to the G-protein coupled receptor 1 family.

It localises to the cell membrane. Functionally, receptor for relaxin. The activity of this receptor is mediated by G proteins leading to stimulation of adenylate cyclase and an increase of cAMP. May also be a receptor for Leydig insulin-like peptide (INSL3). This is Relaxin receptor 2 (RXFP2) from Canis lupus familiaris (Dog).